A 110-amino-acid chain; its full sequence is Insulin (110 aa).

The first 24 residues, 1-24 (MALWMRLLPLLALLALWGPDPAQA), serve as a signal peptide directing secretion. 3 disulfides stabilise this stretch: Cys-31–Cys-96, Cys-43–Cys-109, and Cys-95–Cys-100. Residues 57-87 (EAEDLQVGQVELGGGPGAGSLQPLALEGSLQ) constitute a propeptide, c peptide.

This sequence belongs to the insulin family. As to quaternary structure, heterodimer of a B chain and an A chain linked by two disulfide bonds.

The protein localises to the secreted. In terms of biological role, insulin decreases blood glucose concentration. It increases cell permeability to monosaccharides, amino acids and fatty acids. It accelerates glycolysis, the pentose phosphate cycle, and glycogen synthesis in liver. The polypeptide is Insulin (INS) (Pongo pygmaeus (Bornean orangutan)).